We begin with the raw amino-acid sequence, 1838 residues long: Nuclear pore complex protein NUP205 (1838 aa).

Belongs to the NUP186/NUP192/NUP205 family. Part of the nuclear pore complex (NPC). The NPC has an eight-fold symmetrical structure comprising a central transport channel and two rings, the cytoplasmic and nuclear rings, to which eight filaments are attached. The cytoplasmic filaments have loose ends, while the nuclear filaments are joined in a distal ring, forming a nuclear basket. NPCs are highly dynamic in configuration and composition, and can be devided in 3 subcomplexes, the NUP62 subcomplex, the NUP107-160 subcomplex and the NUP93 subcomplex, containing approximately 30 different nucleoporin proteins.

The protein localises to the nucleus envelope. It localises to the nucleus. Its subcellular location is the nuclear pore complex. The polypeptide is Nuclear pore complex protein NUP205 (Arabidopsis thaliana (Mouse-ear cress)).